The following is an 85-amino-acid chain: CRISPR-associated endoribonuclease Cas2 (85 aa).

A Mg(2+)-binding site is contributed by Asp-8.

It belongs to the CRISPR-associated endoribonuclease Cas2 protein family. In terms of assembly, homodimer, forms a heterotetramer with a Cas1 homodimer. Mg(2+) is required as a cofactor.

Its function is as follows. CRISPR (clustered regularly interspaced short palindromic repeat), is an adaptive immune system that provides protection against mobile genetic elements (viruses, transposable elements and conjugative plasmids). CRISPR clusters contain sequences complementary to antecedent mobile elements and target invading nucleic acids. CRISPR clusters are transcribed and processed into CRISPR RNA (crRNA). Functions as a ssRNA-specific endoribonuclease. Involved in the integration of spacer DNA into the CRISPR cassette. The chain is CRISPR-associated endoribonuclease Cas2 from Pyrococcus furiosus (strain ATCC 43587 / DSM 3638 / JCM 8422 / Vc1).